The chain runs to 1392 residues: Ankyrin repeat domain-containing protein 30B (1392 aa).

Residues 1–21 (MKRLLAAAGKGVRGPEPPNPF) form a disordered region. ANK repeat units lie at residues 72–101 (KKRT…QLNV), 105–134 (EGRT…DLNY), 138–167 (YGNT…VIEV), 171–200 (ASLT…NANA), and 204–233 (SKCT…DVFA). Disordered stretches follow at residues 265–292 (PKNP…ERTP), 558–587 (AQMF…VSQK), 636–656 (DRET…PTCG), 671–690 (RETL…PTCG), 830–877 (KEGA…SDSE), and 904–926 (GKIE…QNSV). 2 stretches are compositionally biased toward polar residues: residues 267 to 280 (NPQN…STGT) and 576 to 586 (DSESPCETVSQ). A compositionally biased stretch (basic and acidic residues) spans 636–650 (DRETFKAESPDKDGL). Polar residues predominate over residues 830 to 840 (KEGATKTVTGQ). 2 stretches are compositionally biased toward basic and acidic residues: residues 864–874 (LGRKEDTKSTS) and 904–915 (GKIEESPEKPSH). Coiled-coil stretches lie at residues 960–1168 (RELK…KQDK) and 1270–1318 (ETQC…QQLV).

Expressed in brain, breast and testis.

This Homo sapiens (Human) protein is Ankyrin repeat domain-containing protein 30B (ANKRD30B).